The sequence spans 132 residues: Agouti-signaling protein (132 aa).

A signal peptide spans 1–22 (MDVTRLLLATLLVFLCFFTANS). An N-linked (GlcNAc...) asparagine glycan is attached at asparagine 39. Residues 62 to 85 (IGRKAAEKKRSSKKEASMKKVVRP) are disordered. Positions 65–79 (KAAEKKRSSKKEASM) are enriched in basic and acidic residues. Intrachain disulfides connect cysteine 93-cysteine 108, cysteine 100-cysteine 114, cysteine 107-cysteine 125, cysteine 111-cysteine 132, and cysteine 116-cysteine 123. The region spanning 93–132 (CVATRNSCKPPAPACCDPCASCQCRFFRSACSCRVLSLNC) is the Agouti domain.

As to expression, widely expressed at low levels. Highly expressed in the skin. Expressed in adipose tissue.

It localises to the secreted. Its function is as follows. Involved in the regulation of melanogenesis. The binding of ASP to MC1R precludes alpha-MSH initiated signaling and thus blocks production of cAMP, leading to a down-regulation of eumelanogenesis (brown/black pigment) and thus increasing synthesis of pheomelanin (yellow/red pigment). In higher primates, agouti may affect the quality of hair pigmentation rather than its pattern of deposition. Could well play a role in neuroendocrine aspects of melanocortin action. May have some functional role in regulating the lipid metabolism with adipocytes. This Homo sapiens (Human) protein is Agouti-signaling protein (ASIP).